We begin with the raw amino-acid sequence, 288 residues long: Elongation factor Ts (288 aa).

The segment at 79–82 (TDFV) is involved in Mg(2+) ion dislocation from EF-Tu.

It belongs to the EF-Ts family.

The protein localises to the cytoplasm. Its function is as follows. Associates with the EF-Tu.GDP complex and induces the exchange of GDP to GTP. It remains bound to the aminoacyl-tRNA.EF-Tu.GTP complex up to the GTP hydrolysis stage on the ribosome. This chain is Elongation factor Ts, found in Ehrlichia chaffeensis (strain ATCC CRL-10679 / Arkansas).